The following is a 1359-amino-acid chain: Tripeptidyl-peptidase 2 (1359 aa).

The tract at residues 45 to 81 (AASTTTRGGPSPSAGVAPRAMPSSSSSPPSAAEGTTA) is disordered. Over residues 64-81 (AMPSSSSSPPSAAEGTTA) the composition is skewed to low complexity. The Peptidase S8 domain occupies 102 to 600 (EIGVDRFLAA…HGLLQVDRAF (499 aa)). Catalysis depends on charge relay system residues D126, H353, and S539.

This sequence belongs to the peptidase S8 family.

The catalysed reaction is Release of an N-terminal tripeptide from a polypeptide.. In terms of biological role, serine protease that may function in the proteasome pathway. The sequence is that of Tripeptidyl-peptidase 2 (TPP2) from Oryza sativa subsp. japonica (Rice).